The sequence spans 202 residues: UPF0301 protein ML0028 (202 aa).

This sequence belongs to the UPF0301 (AlgH) family.

In Mycobacterium leprae (strain TN), this protein is UPF0301 protein ML0028.